A 90-amino-acid polypeptide reads, in one-letter code: Acylphosphatase (90 aa).

In terms of domain architecture, Acylphosphatase-like spans 4–90; the sequence is TRRVRFYGRV…TEFQDFQIKR (87 aa). Catalysis depends on residues Arg-19 and Asn-37.

This sequence belongs to the acylphosphatase family.

It catalyses the reaction an acyl phosphate + H2O = a carboxylate + phosphate + H(+). This is Acylphosphatase (acyP) from Thermoplasma volcanium (strain ATCC 51530 / DSM 4299 / JCM 9571 / NBRC 15438 / GSS1).